The sequence spans 285 residues: NAD kinase (285 aa).

D66 functions as the Proton acceptor in the catalytic mechanism. Residues 66 to 67, 137 to 138, R148, R165, D167, and 178 to 183 each bind NAD(+); these read DG, ND, and TAYSLS.

The protein belongs to the NAD kinase family. The cofactor is a divalent metal cation.

Its subcellular location is the cytoplasm. It carries out the reaction NAD(+) + ATP = ADP + NADP(+) + H(+). Its function is as follows. Involved in the regulation of the intracellular balance of NAD and NADP, and is a key enzyme in the biosynthesis of NADP. Catalyzes specifically the phosphorylation on 2'-hydroxyl of the adenosine moiety of NAD to yield NADP. In Prosthecochloris aestuarii (strain DSM 271 / SK 413), this protein is NAD kinase.